Here is a 509-residue protein sequence, read N- to C-terminus: Bifunctional purine biosynthesis protein PurH (509 aa).

The 144-residue stretch at 1 to 144 (MKRALISVSD…KNYAAVTVVV (144 aa)) folds into the MGS-like domain.

This sequence belongs to the PurH family.

It catalyses the reaction (6R)-10-formyltetrahydrofolate + 5-amino-1-(5-phospho-beta-D-ribosyl)imidazole-4-carboxamide = 5-formamido-1-(5-phospho-D-ribosyl)imidazole-4-carboxamide + (6S)-5,6,7,8-tetrahydrofolate. The catalysed reaction is IMP + H2O = 5-formamido-1-(5-phospho-D-ribosyl)imidazole-4-carboxamide. It functions in the pathway purine metabolism; IMP biosynthesis via de novo pathway; 5-formamido-1-(5-phospho-D-ribosyl)imidazole-4-carboxamide from 5-amino-1-(5-phospho-D-ribosyl)imidazole-4-carboxamide (10-formyl THF route): step 1/1. The protein operates within purine metabolism; IMP biosynthesis via de novo pathway; IMP from 5-formamido-1-(5-phospho-D-ribosyl)imidazole-4-carboxamide: step 1/1. In Listeria monocytogenes serotype 4a (strain HCC23), this protein is Bifunctional purine biosynthesis protein PurH.